A 1332-amino-acid polypeptide reads, in one-letter code: Aldehyde oxidase 1 (1332 aa).

The 88-residue stretch at 4 to 91 (STLYFYVNGR…GAAVTTVEGV (88 aa)) folds into the 2Fe-2S ferredoxin-type domain. C43, C48, C51, and C73 together coordinate [2Fe-2S] cluster. Q112 contributes to the Mo-molybdopterin binding site. 4 residues coordinate [2Fe-2S] cluster: C113, C116, C148, and C150. A Mo-molybdopterin-binding site is contributed by C150. Positions 234-419 (FTGDRVTWIS…LSVTIPYSRK (186 aa)) constitute an FAD-binding PCMH-type domain. FAD is bound by residues 262-269 (VVMGNTSV), A343, S352, H356, D365, and L409. Mo-molybdopterin contacts are provided by residues 800–801 (AF), M1041, 1082–1085 (GSVV), Q1197, and L1262. E1264 (proton acceptor; for azaheterocycle hydroxylase activity) is an active-site residue.

The protein belongs to the xanthine dehydrogenase family. In terms of assembly, homodimer. [2Fe-2S] cluster serves as cofactor. The cofactor is FAD. Requires Mo-molybdopterin as cofactor. Expressed in liver.

The protein resides in the cytoplasm. The catalysed reaction is an aldehyde + O2 + H2O = a carboxylate + H2O2 + H(+). It catalyses the reaction retinal + O2 + H2O = retinoate + H2O2 + H(+). Its activity is regulated as follows. Inhibited by menadione and isovanillin. Not inhibited by allopurinol, a xanthine dehydrogenase potent inhibitor. Oxidase with broad substrate specificity, oxidizing aromatic azaheterocycles, such as N1-methylnicotinamide, N-methylphthalazinium and phthalazine, as well as aldehydes, such as benzaldehyde, retinal, pyridoxal, and vanillin. Plays a key role in the metabolism of xenobiotics and drugs containing aromatic azaheterocyclic substituents. Participates in the bioactivation of prodrugs such as famciclovir, catalyzing the oxidation step from 6-deoxypenciclovir to penciclovir, which is a potent antiviral agent. Is probably involved in the regulation of reactive oxygen species homeostasis. May be a prominent source of superoxide generation via the one-electron reduction of molecular oxygen. May also catalyze nitric oxide (NO) production via the reduction of nitrite to NO with NADH or aldehyde as electron donor. May play a role in adipogenesis. The protein is Aldehyde oxidase 1 of Cavia porcellus (Guinea pig).